A 444-amino-acid chain; its full sequence is Adenylosuccinate synthetase (444 aa).

GTP contacts are provided by residues 12–18 (GDEGKGK) and 40–42 (GHT). The Proton acceptor role is filled by aspartate 13. Residues aspartate 13 and glycine 40 each contribute to the Mg(2+) site. IMP is bound by residues 13–16 (DEGK), 38–41 (NAGH), threonine 128, arginine 142, glutamine 223, threonine 238, and arginine 302. Histidine 41 serves as the catalytic Proton donor. Residue 298 to 304 (TTTGRRR) participates in substrate binding. GTP contacts are provided by residues arginine 304, 330-332 (KLD), and 412-414 (SLG).

Belongs to the adenylosuccinate synthetase family. In terms of assembly, homodimer. Mg(2+) is required as a cofactor.

The protein localises to the cytoplasm. The enzyme catalyses IMP + L-aspartate + GTP = N(6)-(1,2-dicarboxyethyl)-AMP + GDP + phosphate + 2 H(+). The protein operates within purine metabolism; AMP biosynthesis via de novo pathway; AMP from IMP: step 1/2. In terms of biological role, plays an important role in the de novo pathway of purine nucleotide biosynthesis. Catalyzes the first committed step in the biosynthesis of AMP from IMP. This is Adenylosuccinate synthetase from Synechococcus sp. (strain ATCC 27144 / PCC 6301 / SAUG 1402/1) (Anacystis nidulans).